Reading from the N-terminus, the 308-residue chain is Methionyl-tRNA formyltransferase (308 aa).

Position 110–113 (Ser110–Pro113) interacts with (6S)-5,6,7,8-tetrahydrofolate.

This sequence belongs to the Fmt family.

The enzyme catalyses L-methionyl-tRNA(fMet) + (6R)-10-formyltetrahydrofolate = N-formyl-L-methionyl-tRNA(fMet) + (6S)-5,6,7,8-tetrahydrofolate + H(+). Its function is as follows. Attaches a formyl group to the free amino group of methionyl-tRNA(fMet). The formyl group appears to play a dual role in the initiator identity of N-formylmethionyl-tRNA by promoting its recognition by IF2 and preventing the misappropriation of this tRNA by the elongation apparatus. This chain is Methionyl-tRNA formyltransferase, found in Neisseria meningitidis serogroup C (strain 053442).